Reading from the N-terminus, the 387-residue chain is Succinate--CoA ligase [ADP-forming] subunit beta (387 aa).

The ATP-grasp domain maps to 9–236 (KELFAKHNVP…KDATDPLELK (228 aa)). ATP is bound by residues K45, 52–54 (GRG), S94, and E99. Positions 191 and 205 each coordinate Mg(2+). Residues N256 and 318-320 (GIT) each bind substrate.

The protein belongs to the succinate/malate CoA ligase beta subunit family. In terms of assembly, heterotetramer of two alpha and two beta subunits. Mg(2+) is required as a cofactor.

It carries out the reaction succinate + ATP + CoA = succinyl-CoA + ADP + phosphate. The catalysed reaction is GTP + succinate + CoA = succinyl-CoA + GDP + phosphate. The protein operates within carbohydrate metabolism; tricarboxylic acid cycle; succinate from succinyl-CoA (ligase route): step 1/1. Succinyl-CoA synthetase functions in the citric acid cycle (TCA), coupling the hydrolysis of succinyl-CoA to the synthesis of either ATP or GTP and thus represents the only step of substrate-level phosphorylation in the TCA. The beta subunit provides nucleotide specificity of the enzyme and binds the substrate succinate, while the binding sites for coenzyme A and phosphate are found in the alpha subunit. This Mycolicibacterium gilvum (strain PYR-GCK) (Mycobacterium gilvum (strain PYR-GCK)) protein is Succinate--CoA ligase [ADP-forming] subunit beta.